Here is a 71-residue protein sequence, read N- to C-terminus: Large ribosomal subunit protein bL31 (71 aa).

Residues Cys-16, Cys-18, Cys-37, and Cys-40 each coordinate Zn(2+).

Belongs to the bacterial ribosomal protein bL31 family. Type A subfamily. In terms of assembly, part of the 50S ribosomal subunit. Zn(2+) serves as cofactor.

In terms of biological role, binds the 23S rRNA. The chain is Large ribosomal subunit protein bL31 from Mannheimia succiniciproducens (strain KCTC 0769BP / MBEL55E).